The chain runs to 141 residues: Nucleoside diphosphate kinase (141 aa).

ATP contacts are provided by lysine 11, phenylalanine 59, arginine 87, threonine 93, arginine 104, and asparagine 114. Histidine 117 (pros-phosphohistidine intermediate) is an active-site residue.

This sequence belongs to the NDK family. As to quaternary structure, homotetramer. It depends on Mg(2+) as a cofactor.

It is found in the cytoplasm. The enzyme catalyses a 2'-deoxyribonucleoside 5'-diphosphate + ATP = a 2'-deoxyribonucleoside 5'-triphosphate + ADP. The catalysed reaction is a ribonucleoside 5'-diphosphate + ATP = a ribonucleoside 5'-triphosphate + ADP. Functionally, major role in the synthesis of nucleoside triphosphates other than ATP. The ATP gamma phosphate is transferred to the NDP beta phosphate via a ping-pong mechanism, using a phosphorylated active-site intermediate. The polypeptide is Nucleoside diphosphate kinase (Haemophilus influenzae (strain ATCC 51907 / DSM 11121 / KW20 / Rd)).